We begin with the raw amino-acid sequence, 339 residues long: Ketol-acid reductoisomerase (NADP(+)) (339 aa).

The KARI N-terminal Rossmann domain occupies 1–182; the sequence is MRVYYDRDAD…GGGRSGIIET (182 aa). NADP(+)-binding positions include 24–27, arginine 48, serine 51, threonine 53, and 83–86; these read YGSQ and DELQ. Histidine 108 is an active-site residue. Position 134 (glycine 134) interacts with NADP(+). Positions 183-328 constitute a KARI C-terminal knotted domain; that stretch reads SFREECETDL…EKLRAMMPWI (146 aa). Positions 191, 195, 227, and 231 each coordinate Mg(2+). Serine 252 serves as a coordination point for substrate.

It belongs to the ketol-acid reductoisomerase family. The cofactor is Mg(2+).

The catalysed reaction is (2R)-2,3-dihydroxy-3-methylbutanoate + NADP(+) = (2S)-2-acetolactate + NADPH + H(+). It catalyses the reaction (2R,3R)-2,3-dihydroxy-3-methylpentanoate + NADP(+) = (S)-2-ethyl-2-hydroxy-3-oxobutanoate + NADPH + H(+). It participates in amino-acid biosynthesis; L-isoleucine biosynthesis; L-isoleucine from 2-oxobutanoate: step 2/4. Its pathway is amino-acid biosynthesis; L-valine biosynthesis; L-valine from pyruvate: step 2/4. In terms of biological role, involved in the biosynthesis of branched-chain amino acids (BCAA). Catalyzes an alkyl-migration followed by a ketol-acid reduction of (S)-2-acetolactate (S2AL) to yield (R)-2,3-dihydroxy-isovalerate. In the isomerase reaction, S2AL is rearranged via a Mg-dependent methyl migration to produce 3-hydroxy-3-methyl-2-ketobutyrate (HMKB). In the reductase reaction, this 2-ketoacid undergoes a metal-dependent reduction by NADPH to yield (R)-2,3-dihydroxy-isovalerate. The chain is Ketol-acid reductoisomerase (NADP(+)) from Paramagnetospirillum magneticum (strain ATCC 700264 / AMB-1) (Magnetospirillum magneticum).